Reading from the N-terminus, the 296-residue chain is PYK10-binding protein 2 (296 aa).

A disordered region spans residues 1-20 (MAQKVEAKGGKGGNQWDDGS). A2 is subject to N-acetylalanine. 2 Jacalin-type lectin domains span residues 2-142 (AQKV…YFAP) and 150-293 (AKPL…HVRP).

The protein belongs to the jacalin lectin family. In terms of assembly, component of the PYK10 complex, at least composed of PYK10/BGLU23, BGLU21, BGLU22, JAL22, JAL23, PBP1/JAL30, PBP2/JAL31, JAL32, JAL33, JAL34, JAL35, GLL22 and GLL23.

Its function is as follows. Polymerizer-type lectin that may facilitate the correct polymerization of BGLU23/PYK10 upon tissue damage. Activates BGLU21, BGLU22 and BGLU23. The sequence is that of PYK10-binding protein 2 (PBP2) from Arabidopsis thaliana (Mouse-ear cress).